We begin with the raw amino-acid sequence, 311 residues long: Systemic RNA interference defective protein 2 (311 aa).

Residues 1 to 20 form the signal peptide; the sequence is MPRFVYFCFALIALLPISWT. Over 21-188 the chain is Extracellular; it reads MDGILITDVE…EETKTVVNKN (168 aa). The helical transmembrane segment at 189–209 threads the bilayer; it reads GGAVAVAVIEGIALIAILAFL. Topologically, residues 210-311 are cytoplasmic; the sequence is GYRTMVNHKL…NDPFATLESW (102 aa). Residues 287 to 301 are compositionally biased toward polar residues; it reads NSSAAQPSTTSNGQF. Residues 287–311 form a disordered region; sequence NSSAAQPSTTSNGQFNDPFATLESW.

In terms of tissue distribution, expressed in the intestinal lumen. Also present, at lower levels, in the excretory duct cells.

The protein localises to the apical cell membrane. It is found in the cytoplasm. Plays a role in RNA-mediated gene silencing by mediating endocytic uptake of double-stranded RNA (dsRNA) ingested from the environment into intestinal cells from the intestinal lumen. Selective for dsRNAs of at least 50 bp. Required for avoidance behavior induced by small RNAs derived from pathogenic bacteria such as P.aeruginosa. The polypeptide is Systemic RNA interference defective protein 2 (Caenorhabditis elegans).